The primary structure comprises 484 residues: MALFEIIISLFVVYIIHNAISKYKKIHVNELCGPTPIPILGNLHQFGELPHRVLTKMTKKYGHILRVYMADMYTVVVSDPLLIREMYVDNSDIFTDRVKKPSVEHGTFYHGTVTSYGEHWKNNREIVGKAMRKTNLKHIYELLDKQVDVLIRSMKSIETSGKTFDTRYYITKFTMSAMFKFLFNHDIPEDEDINKGDTQKLMGPMSEVFQNAGRGSLFDVINITQPLYLLYLEMFDQSFKDIMKYHREKYNEHLKTFDPDVERDLLDILIKEYGTDNDDKILSILATINDFFLAGVDTSSTALESMVLMLTNYPEIQEKAFDEIKTVVNGRSKVNLSDRQSTPYLVAVIKETLRYKPMSPFGLPRSSSKDCMIGGHFIPKNAQILINYQALGMNEEYYENPEQFDPSRFLKVESNVAFLPFSIGIRSCVGQSFAQDELYICISNILLNFKLKSIDGKKIDETEEYGLTLKTKNRFNVTLEKRII.

Residues 1-21 (MALFEIIISLFVVYIIHNAIS) traverse the membrane as a helical segment. Cys428 is a binding site for heme.

It belongs to the cytochrome P450 family. It depends on heme as a cofactor.

The protein resides in the membrane. The sequence is that of Probable cytochrome P450 508A1 (cyp508A1-1) from Dictyostelium discoideum (Social amoeba).